The primary structure comprises 421 residues: Serine--tRNA ligase (421 aa).

232 to 234 contacts L-serine; the sequence is TAE. 262–264 lines the ATP pocket; sequence RSE. An L-serine-binding site is contributed by Glu-285. An ATP-binding site is contributed by 349–352; it reads EVSS. An L-serine-binding site is contributed by Ser-384.

The protein belongs to the class-II aminoacyl-tRNA synthetase family. Type-1 seryl-tRNA synthetase subfamily. In terms of assembly, homodimer. The tRNA molecule binds across the dimer.

It localises to the cytoplasm. It carries out the reaction tRNA(Ser) + L-serine + ATP = L-seryl-tRNA(Ser) + AMP + diphosphate + H(+). The catalysed reaction is tRNA(Sec) + L-serine + ATP = L-seryl-tRNA(Sec) + AMP + diphosphate + H(+). Its pathway is aminoacyl-tRNA biosynthesis; selenocysteinyl-tRNA(Sec) biosynthesis; L-seryl-tRNA(Sec) from L-serine and tRNA(Sec): step 1/1. Functionally, catalyzes the attachment of serine to tRNA(Ser). Is also able to aminoacylate tRNA(Sec) with serine, to form the misacylated tRNA L-seryl-tRNA(Sec), which will be further converted into selenocysteinyl-tRNA(Sec). In Mycoplasma mobile (strain ATCC 43663 / 163K / NCTC 11711) (Mesomycoplasma mobile), this protein is Serine--tRNA ligase.